The chain runs to 269 residues: Aminoglycoside (3'') (9) adenylyltransferase (269 aa).

It catalyses the reaction streptomycin + ATP = 3''-O-adenylylstreptomycin + diphosphate. The catalysed reaction is spectinomycin + ATP = 9-O-adenylylspectinomycin + diphosphate. In terms of biological role, mediates bacterial resistance to the antibiotic spectinomycin and probably also to streptomycin. The protein is Aminoglycoside (3'') (9) adenylyltransferase of Rhizobium radiobacter (Agrobacterium tumefaciens).